A 367-amino-acid polypeptide reads, in one-letter code: Glutamate 5-kinase (367 aa).

Position 10 (Lys-10) interacts with ATP. Substrate contacts are provided by Ser-50, Asp-137, and Asn-149. Residues Thr-169 to Asp-170 and Thr-211 to Lys-217 contribute to the ATP site. Positions Ala-275–Glu-353 constitute a PUA domain.

It belongs to the glutamate 5-kinase family.

Its subcellular location is the cytoplasm. It carries out the reaction L-glutamate + ATP = L-glutamyl 5-phosphate + ADP. Its pathway is amino-acid biosynthesis; L-proline biosynthesis; L-glutamate 5-semialdehyde from L-glutamate: step 1/2. Catalyzes the transfer of a phosphate group to glutamate to form L-glutamate 5-phosphate. This chain is Glutamate 5-kinase, found in Proteus mirabilis (strain HI4320).